The sequence spans 33 residues: Alpha-amanitin proprotein (33 aa).

Residues 1 to 10 (MSDINATRLP) constitute a propeptide that is removed on maturation. Isoleucine 11 is modified ((3R,4R)-4,5-dihydroxyisoleucine; in form alpha-amanitin). The residue at position 11 (isoleucine 11) is a (3R,4S)-4-hydroxyisoleucine; in form gamma-amanitin. The cyclopeptide (Ile-Pro) cross-link spans 11 to 18 (IWGIGCNP). A cross-link (2'-cysteinyl-6'-hydroxytryptophan sulfoxide (Trp-Cys)) is located at residues 12–16 (WGIGC). Proline 18 bears the 4-hydroxyproline mark. Residues 19–33 (CVGDEVTALLTRGEA) constitute a propeptide that is removed on maturation.

It belongs to the MSDIN fungal toxin family. In terms of processing, processed by the macrocyclase-peptidase enzyme POPB to yield a toxic cyclic decapeptide. POPB first removes 10 residues from the N-terminus. Conformational trapping of the remaining peptide forces the enzyme to release this intermediate rather than proceed to macrocyclization. The enzyme rebinds the remaining peptide in a different conformation and catalyzes macrocyclization of the N-terminal 8 residues.

Major toxin belonging to the bicyclic octapeptides amatoxins that acts by binding non-competitively to RNA polymerase II and greatly slowing the elongation of transcripts from target promoters. The protein is Alpha-amanitin proprotein of Amanita fuligineoides.